The primary structure comprises 217 residues: Growth hormone variant (217 aa).

The first 26 residues, 1-26 (MAAGSRTSLLLAFGLLCLPWLQEGSA), serve as a signal peptide directing secretion. Intrachain disulfides connect Cys-79/Cys-191 and Cys-208/Cys-215. Ser-132 carries the post-translational modification Phosphoserine. Asn-166 is a glycosylation site (N-linked (GlcNAc...) asparagine). At Ser-176 the chain carries Phosphoserine.

The protein belongs to the somatotropin/prolactin family. Expressed in the placenta.

It localises to the secreted. In terms of biological role, plays an important role in growth control. Its major role in stimulating body growth is to stimulate the liver and other tissues to secrete IGF1. It stimulates both the differentiation and proliferation of myoblasts. It also stimulates amino acid uptake and protein synthesis in muscle and other tissues. The sequence is that of Growth hormone variant (GH2) from Pan troglodytes (Chimpanzee).